The chain runs to 187 residues: Elongation factor P (187 aa).

Belongs to the elongation factor P family.

Its subcellular location is the cytoplasm. The protein operates within protein biosynthesis; polypeptide chain elongation. Involved in peptide bond synthesis. Stimulates efficient translation and peptide-bond synthesis on native or reconstituted 70S ribosomes in vitro. Probably functions indirectly by altering the affinity of the ribosome for aminoacyl-tRNA, thus increasing their reactivity as acceptors for peptidyl transferase. This is Elongation factor P from Helicobacter pylori (strain P12).